The following is a 318-amino-acid chain: uncharacterized protein (318 aa).

The helical transmembrane segment at 2-22 (ILELIIVLVLLVLAFKSLKIL) threads the bilayer. Residues 295–318 (SDPEDKGVSEVETESQPAEKPEKH) are disordered.

This sequence belongs to the band 7/mec-2 family.

The protein localises to the membrane. This is an uncharacterized protein from Methanothermobacter thermautotrophicus (strain ATCC 29096 / DSM 1053 / JCM 10044 / NBRC 100330 / Delta H) (Methanobacterium thermoautotrophicum).